A 228-amino-acid polypeptide reads, in one-letter code: Phosphoribosylformylglycinamidine synthase subunit PurQ (228 aa).

Residues 2 to 225 (KAAVISFPGS…INQTEGADVR (224 aa)) enclose the Glutamine amidotransferase type-1 domain. Cys-86 acts as the Nucleophile in catalysis. Active-site residues include His-194 and Glu-196.

In terms of assembly, part of the FGAM synthase complex composed of 1 PurL, 1 PurQ and 2 PurS subunits.

The protein localises to the cytoplasm. It catalyses the reaction N(2)-formyl-N(1)-(5-phospho-beta-D-ribosyl)glycinamide + L-glutamine + ATP + H2O = 2-formamido-N(1)-(5-O-phospho-beta-D-ribosyl)acetamidine + L-glutamate + ADP + phosphate + H(+). The enzyme catalyses L-glutamine + H2O = L-glutamate + NH4(+). The protein operates within purine metabolism; IMP biosynthesis via de novo pathway; 5-amino-1-(5-phospho-D-ribosyl)imidazole from N(2)-formyl-N(1)-(5-phospho-D-ribosyl)glycinamide: step 1/2. Functionally, part of the phosphoribosylformylglycinamidine synthase complex involved in the purines biosynthetic pathway. Catalyzes the ATP-dependent conversion of formylglycinamide ribonucleotide (FGAR) and glutamine to yield formylglycinamidine ribonucleotide (FGAM) and glutamate. The FGAM synthase complex is composed of three subunits. PurQ produces an ammonia molecule by converting glutamine to glutamate. PurL transfers the ammonia molecule to FGAR to form FGAM in an ATP-dependent manner. PurS interacts with PurQ and PurL and is thought to assist in the transfer of the ammonia molecule from PurQ to PurL. This Lacticaseibacillus casei (strain BL23) (Lactobacillus casei) protein is Phosphoribosylformylglycinamidine synthase subunit PurQ.